Here is a 540-residue protein sequence, read N- to C-terminus: Ipecac alkaloid beta-glucosidase 9 (540 aa).

Residues glutamine 36, histidine 140, asparagine 185–glutamate 186, tyrosine 350, glutamate 421, tryptophan 470, and phenylalanine 486 contribute to the a beta-D-glucoside site. The active-site Proton donor is the glutamate 186. The active-site Nucleophile is the glutamate 421.

Belongs to the glycosyl hydrolase 1 family.

The protein localises to the cytoplasm. Its subcellular location is the cytosol. It carries out the reaction deacetylipecoside + H2O = deacetylipecoside aglycone + D-glucose. The catalysed reaction is deacetylisoipecoside + H2O = deacetylisoipecoside aglycone + D-glucose. The protein operates within alkaloid biosynthesis. Functionally, beta-glucosidase catalyzing deglucosylation on N-deacetylisoipecoside and N-deacetylipecoside. This is Ipecac alkaloid beta-glucosidase 9 from Carapichea ipecacuanha (Ipecac).